A 369-amino-acid polypeptide reads, in one-letter code: MSEIVNGRGSGIVLLCRAGFEGDCAAEIQDKTAELGVYGYCQTQPEQAYVTYHCQHEEAEHIARKLTLKDLVFAREMFALLGPVKVAGIEDRASEVIKVLKPHQETFGLAGELRVGTPDTNEANQLSKFCRKFSVPLRQALRKEELLSNKPLAKRPMLHVLFVNPAHALVGYSYSYNQTLHNGGIVRLRMSKEAPSRSTLKLDEAFQVFVPENEHEKRVHSGMKAVDLGAAPGGWTYQLVRRGMMVQAVDNGPMAESLMETGQVKHIQEDGFKFRPKRKNVTWLVCDMVEKPARVGELMTSWLLEGDCEEAIFNLKLPMRQRYAAVKGYLDQIKEQLQTEGTKPFEIQAKHLYHDREEITVHLRWLPRS.

Residues S198, 231-234 (APGG), D250, D270, and D287 each bind S-adenosyl-L-methionine. K316 (proton acceptor) is an active-site residue.

Belongs to the class I-like SAM-binding methyltransferase superfamily. RNA methyltransferase RlmE family. RlmM subfamily. Monomer.

The protein localises to the cytoplasm. The catalysed reaction is cytidine(2498) in 23S rRNA + S-adenosyl-L-methionine = 2'-O-methylcytidine(2498) in 23S rRNA + S-adenosyl-L-homocysteine + H(+). Functionally, catalyzes the 2'-O-methylation at nucleotide C2498 in 23S rRNA. This is Ribosomal RNA large subunit methyltransferase M from Idiomarina loihiensis (strain ATCC BAA-735 / DSM 15497 / L2-TR).